We begin with the raw amino-acid sequence, 430 residues long: MGRSYEKSKQAFEEAQHLMPGGVNSPVRAFKSVNTDPIFMERGKGAKIYDIDGNEYIDYVLSWGPLILGHTNDRVVESIQRVAEKGTSFGASTLVENELAKLVSERVPSIEVIRMVSSGTEATMSALRLARGFTGRNKIVKFEGCYHGHGDSLLIKAGSGVATLGLPDSPGVPEGTASNTITVPYNDLESIQVAFQEFGDDIAGVIVEPVAGNMGVVPPQDGFLQGLRDITEQYGALLIFDEVMTGFRVDYHCAQGYFGVTPDLTCLGKVIGGGLPVGAYGGRADIMRQIAPSGPIYQAGTLSGNPLAMTAGLETLKQLTPESYEEFRRKGDRLEEGISNAAKTHGIPLTFNRAGSMIGFFFTDEEVINYDIAKNADLALFAEFYKEMADHGIFLPPSQFEGLFLSTAHTDEDIEYTIETVEKVFQKLRR.

At Lys-269 the chain carries N6-(pyridoxal phosphate)lysine.

Belongs to the class-III pyridoxal-phosphate-dependent aminotransferase family. HemL subfamily. Homodimer. Pyridoxal 5'-phosphate is required as a cofactor.

Its subcellular location is the cytoplasm. The enzyme catalyses (S)-4-amino-5-oxopentanoate = 5-aminolevulinate. It participates in porphyrin-containing compound metabolism; protoporphyrin-IX biosynthesis; 5-aminolevulinate from L-glutamyl-tRNA(Glu): step 2/2. This is Glutamate-1-semialdehyde 2,1-aminomutase 2 from Bacillus pumilus (strain SAFR-032).